Here is a 90-residue protein sequence, read N- to C-terminus: Probable small nuclear ribonucleoprotein E (90 aa).

Residues 14–89 (VNLIFRYLQN…ITLIHAAAQE (76 aa)) form the Sm domain.

The protein belongs to the snRNP Sm proteins family. In terms of assembly, core component of the spliceosomal U1, U2, U4 and U5 small nuclear ribonucleoproteins (snRNPs), the building blocks of the spliceosome.

The protein resides in the nucleus. It is found in the cytoplasm. Its subcellular location is the cytosol. Functionally, plays a role in pre-mRNA splicing as a core component of the spliceosomal U1, U2, U4 and U5 small nuclear ribonucleoproteins (snRNPs), the building blocks of the spliceosome. This chain is Probable small nuclear ribonucleoprotein E (snr-6), found in Caenorhabditis briggsae.